Consider the following 378-residue polypeptide: MGMLKIGKNCSVCKEWQEHCYWSHMADHSKHFLKHMVGDFTESMTVPARFANNFNGHISEEVNLRSPSGETWSIGVANSDAGELVLQPGWKEFVDGNGIEEGDCLLFRYSGVSSSFDVLIFDPSGCEKASPHFVGSHGFGRAENSAGAEQGGRNGRRTPPIVDGDNGHRHHLEMTLHRNSCRSIPRACKRSLFSDETEAKENDGEDEDVVAAAEGGRYGEYYFSRHGRVAEYNLREEDREEISRVPVPVQPGNPVFVQVIHSSHVRSSKYCIVGVSPEFAGKYLGAVEREVVLERASRGGEWHVPFVHRQNTRGFYGAGWRQFAGDNRLVAHDVCLFELTMVDAAASGGGNRRRRWSRRPTMTVHVLRRVRGRFVLLR.

The TF-B3 1 DNA-binding region spans 29 to 124; that stretch reads SKHFLKHMVG…SFDVLIFDPS (96 aa). The segment at 140 to 159 is disordered; that stretch reads GRAENSAGAEQGGRNGRRTP. Positions 256–370 form a DNA-binding region, TF-B3 2; that stretch reads FVQVIHSSHV…TMTVHVLRRV (115 aa).

It is found in the nucleus. This Oryza sativa subsp. japonica (Rice) protein is B3 domain-containing protein Os03g0622200.